A 319-amino-acid polypeptide reads, in one-letter code: Carbonic anhydrase, chloroplastic (319 aa).

The transit peptide at 1-98 directs the protein to the chloroplast; sequence MSTINGCLTS…AASKVAQITS (98 aa).

Belongs to the beta-class carbonic anhydrase family. Homohexamer.

Its subcellular location is the plastid. It is found in the chloroplast stroma. The catalysed reaction is hydrogencarbonate + H(+) = CO2 + H2O. Reversible hydration of carbon dioxide. The chain is Carbonic anhydrase, chloroplastic from Spinacia oleracea (Spinach).